A 465-amino-acid chain; its full sequence is Probable Xaa-Pro aminopeptidase pepP (465 aa).

D263, D274, E397, and E437 together coordinate Mn(2+).

This sequence belongs to the peptidase M24B family. Mn(2+) is required as a cofactor.

It catalyses the reaction Release of any N-terminal amino acid, including proline, that is linked to proline, even from a dipeptide or tripeptide.. Its function is as follows. Catalyzes the removal of a penultimate prolyl residue from the N-termini of peptides. This is Probable Xaa-Pro aminopeptidase pepP (pepP) from Penicillium rubens (strain ATCC 28089 / DSM 1075 / NRRL 1951 / Wisconsin 54-1255) (Penicillium chrysogenum).